Reading from the N-terminus, the 70-residue chain is DNA-directed RNA polymerase subunit omega (70 aa).

Belongs to the RNA polymerase subunit omega family. The RNAP catalytic core consists of 2 alpha, 1 beta, 1 beta' and 1 omega subunit. When a sigma factor is associated with the core the holoenzyme is formed, which can initiate transcription.

The enzyme catalyses RNA(n) + a ribonucleoside 5'-triphosphate = RNA(n+1) + diphosphate. Functionally, promotes RNA polymerase assembly. Latches the N- and C-terminal regions of the beta' subunit thereby facilitating its interaction with the beta and alpha subunits. In Pelobacter propionicus (strain DSM 2379 / NBRC 103807 / OttBd1), this protein is DNA-directed RNA polymerase subunit omega.